Consider the following 307-residue polypeptide: Nucleotide-binding protein Achl_1824 (307 aa).

An ATP-binding site is contributed by 30–37 (GMSGAGRS). 81–84 (DVRS) contacts GTP.

Belongs to the RapZ-like family.

Functionally, displays ATPase and GTPase activities. This is Nucleotide-binding protein Achl_1824 from Pseudarthrobacter chlorophenolicus (strain ATCC 700700 / DSM 12829 / CIP 107037 / JCM 12360 / KCTC 9906 / NCIMB 13794 / A6) (Arthrobacter chlorophenolicus).